A 341-amino-acid chain; its full sequence is Cysteine-rich repeat secretory protein 1 (341 aa).

An N-terminal signal peptide occupies residues 1 to 25 (MFSLPLHQSKLIFLLSFLLIKTLNA). 2 consecutive Gnk2-homologous domains span residues 28 to 131 (TYLL…SRKI) and 136 to 245 (DQGP…ATFL). Cystine bridges form between C85-C94, C97-C122, C199-C208, and C211-C236. A compositionally biased stretch (pro residues) spans 247-262 (PPPPPPPPPPPPPPPQ). The segment at 247 to 274 (PPPPPPPPPPPPPPPQRLYGENDTPSSD) is disordered.

It belongs to the cysteine-rich repeat secretory protein family.

Its subcellular location is the secreted. The chain is Cysteine-rich repeat secretory protein 1 (CRRSP1) from Arabidopsis thaliana (Mouse-ear cress).